A 174-amino-acid polypeptide reads, in one-letter code: Adenylate kinase (174 aa).

Residues 12–41 form an NMP region; that stretch reads STGDMLRAAIKAGTPLGLEAKKIIDEGGLV. Residues Thr13, Arg18, 39–41, 67–70, and Gln74 each bind AMP; these read GLV and GFPR. The LID stretch occupies residues 104 to 141; the sequence is GRRVHLASGRTYHVTYNPPKVEGKDDVTGEDLIQRDDD. Residues Arg105 and 114-115 each bind ATP; that span reads TY. Residues Arg138 and Arg149 each coordinate AMP.

It belongs to the adenylate kinase family. Monomer.

The protein localises to the cytoplasm. The enzyme catalyses AMP + ATP = 2 ADP. It participates in purine metabolism; AMP biosynthesis via salvage pathway; AMP from ADP: step 1/1. Catalyzes the reversible transfer of the terminal phosphate group between ATP and AMP. Plays an important role in cellular energy homeostasis and in adenine nucleotide metabolism. This Neisseria cinerea protein is Adenylate kinase.